We begin with the raw amino-acid sequence, 695 residues long: Threonine--tRNA ligase (695 aa).

Positions 1 to 76 constitute a TGS domain; that stretch reads MPRIPSPPQA…TTTDVVEPVT (76 aa). Residues 279 to 585 are catalytic; sequence DHRKLGVELD…LLEHHAGAFP (307 aa). Zn(2+) is bound by residues C384, H435, and H562.

The protein belongs to the class-II aminoacyl-tRNA synthetase family. In terms of assembly, homodimer. Requires Zn(2+) as cofactor.

The protein resides in the cytoplasm. The enzyme catalyses tRNA(Thr) + L-threonine + ATP = L-threonyl-tRNA(Thr) + AMP + diphosphate + H(+). Functionally, catalyzes the attachment of threonine to tRNA(Thr) in a two-step reaction: L-threonine is first activated by ATP to form Thr-AMP and then transferred to the acceptor end of tRNA(Thr). Also edits incorrectly charged L-seryl-tRNA(Thr). The chain is Threonine--tRNA ligase from Leifsonia xyli subsp. xyli (strain CTCB07).